A 138-amino-acid polypeptide reads, in one-letter code: Ribosome-binding factor A (138 aa).

The interval 112-138 (EARTQGQEPAADVEPAPGAAPDDEAEE) is disordered. The segment covering 119–131 (EPAADVEPAPGAA) has biased composition (low complexity).

Belongs to the RbfA family. As to quaternary structure, monomer. Binds 30S ribosomal subunits, but not 50S ribosomal subunits or 70S ribosomes.

The protein resides in the cytoplasm. Its function is as follows. One of several proteins that assist in the late maturation steps of the functional core of the 30S ribosomal subunit. Associates with free 30S ribosomal subunits (but not with 30S subunits that are part of 70S ribosomes or polysomes). Required for efficient processing of 16S rRNA. May interact with the 5'-terminal helix region of 16S rRNA. The protein is Ribosome-binding factor A of Anaeromyxobacter dehalogenans (strain 2CP-C).